Reading from the N-terminus, the 156-residue chain is IFN signaling evasion protein OPG029 (156 aa).

This sequence belongs to the orthopoxvirus OPG029 family. As to quaternary structure, interacts with host TANK, TBKBP1 and AZI2; these interactions prevent interferon production. Interacts with host STAT2.

Its function is as follows. Prevents establishment of cellular antiviral state by blocking virus-induced phosphorylation and activation of interferon regulatory factors 3/IRF3 and 7/IRF7, transcription factors critical for the induction of interferons alpha and beta. This blockage is produced through the inhibition of host TBK1, by binding host TBK1 adapter proteins TBKBP1 and AZI2, thereby producing a strong inhibition of the phosphorylation and activation of IRF3 and IRF7. Also acts as an inhibitor of the cellular response to type I IFN by interacting with host STAT2. Mechanistically, exerts its inhibitory effect after host ISGF3 complex (composed of STAT1, STAT2 and IRF9) binding to the interferon stimulated response element (ISRE). This is IFN signaling evasion protein OPG029 (OPG029) from Variola virus (isolate Human/India/Ind3/1967) (VARV).